The primary structure comprises 1379 residues: METGGRARTGTPQPAAPGVWRARPAGGGGGGASSWLLDGNSWLLCYGFLYLALYAQVSQSKPCERTGSCFSGRCVNSTCLCDPGWVGDQCQHCQGRFKLTEPSGYLTDGPINYKYKTKCTWLIEGYPNAVLRLRFNHFATECSWDHMYVYDGDSIYAPLIAVLSGLIVPEIRGNETVPEVVTTSGYALLHFFSDAAYNLTGFNIFYSINSCPNNCSGHGKCTTSVSVPSQVYCECDKYWKGEACDIPYCKANCGSPDHGYCDLTGEKLCVCNDSWQGPDCSLNVPSTESYWILPNVKPFSPSVGRASHKAVLHGKFMWVIGGYTFNYSSFQMVLNYNLESSIWNVGTPSRGPLQRYGHSLALYQENIFMYGGRIETNDGNVTDELWVFNIHSQSWSTKTPTVLGHGQQYAVEGHSAHIMELDSRDVVMIIIFGYSAIYGYTSSIQEYHISSNTWLVPETKGAIVQGGYGHTSVYDEITKSIYVHGGYKALPGNKYGLVDDLYKYEVNTKTWTILKESGFARYLHSAVLINGAMLIFGGNTHNDTSLSNGAKCFSADFLAYDIACDEWKILPKPNLHRDVNRFGHSAVVINGSMYIFGGFSSVLLNDILVYKPPNCKAFRDEELCKNAGPGIKCVWNKNHCESWESGNTNNILRAKCPPKTAASDDRCYRYADCASCTANTNGCQWCDDKKCISANSNCSMSVKNYTKCHVRNEQICNKLTSCKSCSLNLNCQWDQRQQECQALPAHLCGEGWSHIGDACLRVNSSRENYDNAKLYCYNLSGNLASLTTSKEVEFVLDEIQKYTQQKVSPWVGLRKINISYWGWEDMSPFTNTTLQWLPGEPNDSGFCAYLERAAVAGLKANPCTSMANGLVCEKPVVSPNQNARPCKKPCSLRTSCSNCTSNGMECMWCSSTKRCVDSNAYIISFPYGQCLEWQTATCSPQNCSGLRTCGQCLEQPGCGWCNDPSNTGRGHCIEGSSRGPMKLIGMHHSEMVLDTNLCPKEKNYEWSFIQCPACQCNGHSTCINNNVCEQCKNLTTGKQCQDCMPGYYGDPTNGGQCTACTCSGHANICHLHTGKCFCTTKGIKGDQCQLCDSENRYVGNPLRGTCYYSLLIDYQFTFSLLQEDDRHHTAINFIANPEQSNKNLDISINASNNFNLNITWSVGSTAGTISGEETSIVSKNNIKEYRDSFSYEKFNFRSNPNITFYVYVSNFSWPIKIQIAFSQHNTIMDLVQFFVTFFSCFLSLLLVAAVVWKIKQTCWASRRREQLLRERQQMASRPFASVDVALEVGAEQTEFLRGPLEGAPKPIAIEPCAGNRAAVLTVFLCLPRGSSGAPPPGQSGLAIASALIDISQQKASDSKDKTSGVRNRKHLSTRQGTCV.

The tract at residues methionine 1–arginine 23 is disordered. The N-terminal stretch at methionine 1–alanine 52 is a signal peptide. Positions leucine 53–glutamine 91 constitute an EGF-like 1 domain. Over leucine 53–leucine 1230 the chain is Extracellular. Disulfide bonds link cysteine 63–cysteine 79, cysteine 81–cysteine 90, and cysteine 93–cysteine 119. Asparagine 76 is a glycosylation site (N-linked (GlcNAc...) asparagine). One can recognise a CUB domain in the interval cysteine 93 to asparagine 209. N-linked (GlcNAc...) asparagine glycosylation is found at asparagine 174 and asparagine 198. In terms of domain architecture, EGF-like 2 spans serine 207 to aspartate 245. Intrachain disulfides connect cysteine 211/cysteine 221, cysteine 215/cysteine 233, and cysteine 235/cysteine 244. 6 Kelch repeats span residues phenylalanine 316–glutamate 365, isoleucine 367–serine 415, valine 427–aspartate 475, serine 480–glycine 531, methionine 533–glycine 591, and serine 592–asparagine 638. Asparagine 380 is a glycosylation site (N-linked (GlcNAc...) asparagine). PSI domains lie at asparagine 614–proline 657, arginine 666–histidine 709, and isoleucine 715–leucine 760. The region spanning isoleucine 755–glutamate 873 is the C-type lectin domain. N-linked (GlcNAc...) asparagine glycans are attached at residues asparagine 763, asparagine 778, and asparagine 898. Cysteine 776 and cysteine 872 are oxidised to a cystine. PSI domains lie at proline 889–serine 939 and asparagine 942–proline 1012. Intrachain disulfides connect cysteine 1014–cysteine 1022, cysteine 1016–cysteine 1028, cysteine 1031–cysteine 1040, cysteine 1043–cysteine 1057, cysteine 1060–cysteine 1069, cysteine 1062–cysteine 1076, cysteine 1078–cysteine 1088, and cysteine 1091–cysteine 1106. Laminin EGF-like domains lie at cysteine 1014–alanine 1059 and cysteine 1060–tyrosine 1108. An N-linked (GlcNAc...) asparagine glycan is attached at asparagine 1157. A helical transmembrane segment spans residues valine 1231 to valine 1251. At tryptophan 1252–valine 1379 the chain is on the cytoplasmic side. Residues lysine 1354–valine 1379 are disordered.

Interacts with MC4R.

It is found in the membrane. Its function is as follows. May play a role in melanocortin signaling pathways that regulate energy homeostasis. The sequence is that of Attractin-like protein 1 (ATRNL1) from Homo sapiens (Human).